Consider the following 146-residue polypeptide: Large-conductance mechanosensitive channel (146 aa).

3 consecutive transmembrane segments (helical) span residues 17-37, 40-60, and 89-109; these read IDLA…DSLV, IIMP…QKFV, and LTIL…VKLI.

The protein belongs to the MscL family. In terms of assembly, homopentamer.

It localises to the cell inner membrane. Functionally, channel that opens in response to stretch forces in the membrane lipid bilayer. May participate in the regulation of osmotic pressure changes within the cell. This chain is Large-conductance mechanosensitive channel, found in Acinetobacter baylyi (strain ATCC 33305 / BD413 / ADP1).